Reading from the N-terminus, the 367-residue chain is Peptide chain release factor 2 (367 aa).

Gln249 is subject to N5-methylglutamine.

Belongs to the prokaryotic/mitochondrial release factor family. Methylated by PrmC. Methylation increases the termination efficiency of RF2.

Its subcellular location is the cytoplasm. Peptide chain release factor 2 directs the termination of translation in response to the peptide chain termination codons UGA and UAA. The chain is Peptide chain release factor 2 from Thermotoga sp. (strain RQ2).